The primary structure comprises 569 residues: Probable ABC transporter permease protein y4fN (569 aa).

13 helical membrane passes run 10 to 30 (VFYW…LLVP), 68 to 88 (VWMT…QVAV), 98 to 118 (GFLK…AAAG), 121 to 141 (FTYG…PSLP), 145 to 165 (FIGW…FHFL), 196 to 216 (VVLP…LITA), 247 to 267 (PDMA…LILL), 304 to 324 (LAYL…LFSF), 363 to 383 (MSSI…PIMV), 395 to 415 (ICFV…LIVA), 426 to 446 (LVLL…SLPL), 480 to 500 (VVLP…FNNL), and 534 to 554 (AAVS…VILI). The ABC transmembrane type-1 1 domain occupies 64–268 (LWNTVWMTAA…LVLMGLILLS (205 aa)). The ABC transmembrane type-1 2 domain occupies 357-551 (FFNSMLMSSI…TLIMAFSLAV (195 aa)).

It belongs to the binding-protein-dependent transport system permease family. CysTW subfamily.

The protein resides in the cell inner membrane. Probably part of the binding-protein-dependent transport system y4fNOP. Probably responsible for the translocation of the substrate across the membrane. This Sinorhizobium fredii (strain NBRC 101917 / NGR234) protein is Probable ABC transporter permease protein y4fN.